A 255-amino-acid polypeptide reads, in one-letter code: Large ribosomal subunit protein uL4 (255 aa).

This sequence belongs to the universal ribosomal protein uL4 family. In terms of assembly, part of the 50S ribosomal subunit.

Functionally, one of the primary rRNA binding proteins, this protein initially binds near the 5'-end of the 23S rRNA. It is important during the early stages of 50S assembly. It makes multiple contacts with different domains of the 23S rRNA in the assembled 50S subunit and ribosome. In terms of biological role, forms part of the polypeptide exit tunnel. This is Large ribosomal subunit protein uL4 from Thermococcus gammatolerans (strain DSM 15229 / JCM 11827 / EJ3).